The sequence spans 92 residues: uncharacterized protein (92 aa).

Helical transmembrane passes span 1 to 21, 29 to 49, and 51 to 71; these read MEVL…GVIL, IIML…CYYL, and IAIV…LGYL.

Its subcellular location is the cell membrane. This is an uncharacterized protein from Methanocaldococcus jannaschii (strain ATCC 43067 / DSM 2661 / JAL-1 / JCM 10045 / NBRC 100440) (Methanococcus jannaschii).